Here is a 503-residue protein sequence, read N- to C-terminus: Cysteine desulfurase, mitochondrial (503 aa).

A mitochondrion-targeting transit peptide spans 1 to 27 (MSNIAPQVLRHASRACSRRLSLSASLV). Low complexity predominate over residues 34–50 (RTVTGSGSGGRRYVSGS). Residues 34–58 (RTVTGSGSGGRRYVSGSQRHNAQAQ) form a disordered region. Pyridoxal 5'-phosphate is bound by residues 172–173 (AT), Asn-254, Gln-282, and 302–304 (SGH). Lys-305 carries the N6-(pyridoxal phosphate)lysine modification. Pyridoxal 5'-phosphate is bound at residue Thr-342. Cys-427 acts as the Cysteine persulfide intermediate in catalysis. Residue Cys-427 participates in [2Fe-2S] cluster binding.

This sequence belongs to the class-V pyridoxal-phosphate-dependent aminotransferase family. NifS/IscS subfamily. It depends on pyridoxal 5'-phosphate as a cofactor.

It is found in the mitochondrion. It carries out the reaction (sulfur carrier)-H + L-cysteine = (sulfur carrier)-SH + L-alanine. In terms of biological role, catalyzes the removal of elemental sulfur from cysteine to produce alanine. It supplies the inorganic sulfur for iron-sulfur (Fe-S) clusters. Plays a role in both tRNA-processing and mitochondrial metabolism. Involved in the 2-thio-modification of both 5-carboxymethylaminomethyl-2-thiouridine in mitochondrial tRNAs and 5-methoxycarbonylmethyl-2-thiouridine (mcm5s2U) in cytoplasmic tRNAs. The sequence is that of Cysteine desulfurase, mitochondrial from Arthroderma benhamiae (strain ATCC MYA-4681 / CBS 112371) (Trichophyton mentagrophytes).